Consider the following 235-residue polypeptide: tRNA pseudouridine synthase B (235 aa).

D48 (nucleophile) is an active-site residue.

It belongs to the pseudouridine synthase TruB family. Type 1 subfamily.

It catalyses the reaction uridine(55) in tRNA = pseudouridine(55) in tRNA. Responsible for synthesis of pseudouridine from uracil-55 in the psi GC loop of transfer RNAs. This Parabacteroides distasonis (strain ATCC 8503 / DSM 20701 / CIP 104284 / JCM 5825 / NCTC 11152) protein is tRNA pseudouridine synthase B.